Here is a 310-residue protein sequence, read N- to C-terminus: p-hydroxybenzoic acid efflux pump subunit AaeA (310 aa).

Residues 12-32 (AITVVLVILAFIAIFNAWVYY) form a helical membrane-spanning segment.

Belongs to the membrane fusion protein (MFP) (TC 8.A.1) family.

The protein localises to the cell inner membrane. Forms an efflux pump with AaeB. The protein is p-hydroxybenzoic acid efflux pump subunit AaeA of Shigella flexneri.